The sequence spans 215 residues: Ribosomal RNA small subunit methyltransferase G (215 aa).

Residues glycine 78, leucine 83, 128 to 129 (AE), and arginine 146 contribute to the S-adenosyl-L-methionine site.

The protein belongs to the methyltransferase superfamily. RNA methyltransferase RsmG family.

It is found in the cytoplasm. The catalysed reaction is guanosine(527) in 16S rRNA + S-adenosyl-L-methionine = N(7)-methylguanosine(527) in 16S rRNA + S-adenosyl-L-homocysteine. Functionally, specifically methylates the N7 position of guanine in position 527 of 16S rRNA. The chain is Ribosomal RNA small subunit methyltransferase G from Anaeromyxobacter sp. (strain Fw109-5).